We begin with the raw amino-acid sequence, 335 residues long: Nucleoid-associated protein KPK_1538 (335 aa).

This sequence belongs to the YejK family.

The protein localises to the cytoplasm. It is found in the nucleoid. This chain is Nucleoid-associated protein KPK_1538, found in Klebsiella pneumoniae (strain 342).